We begin with the raw amino-acid sequence, 126 residues long: Large ribosomal subunit protein bL12 (126 aa).

Belongs to the bacterial ribosomal protein bL12 family. As to quaternary structure, homodimer. Part of the ribosomal stalk of the 50S ribosomal subunit. Forms a multimeric L10(L12)X complex, where L10 forms an elongated spine to which 2 to 4 L12 dimers bind in a sequential fashion. Binds GTP-bound translation factors.

Functionally, forms part of the ribosomal stalk which helps the ribosome interact with GTP-bound translation factors. Is thus essential for accurate translation. The sequence is that of Large ribosomal subunit protein bL12 from Citrifermentans bemidjiense (strain ATCC BAA-1014 / DSM 16622 / JCM 12645 / Bem) (Geobacter bemidjiensis).